The sequence spans 428 residues: tRNA modification GTPase MnmE (428 aa).

The (6S)-5-formyl-5,6,7,8-tetrahydrofolate site is built by R20, E76, and R116. Residues 212-351 (GFEVAIIGAP…LVEALQDRLL (140 aa)) form the TrmE-type G domain. A K(+)-binding site is contributed by N222. GTP contacts are provided by residues 222–227 (NAGKST), 241–247 (SEVAGTT), and 266–269 (DTAG). Residue S226 coordinates Mg(2+). K(+) contacts are provided by S241, V243, and T246. Residue T247 coordinates Mg(2+). Residue K428 participates in (6S)-5-formyl-5,6,7,8-tetrahydrofolate binding.

This sequence belongs to the TRAFAC class TrmE-Era-EngA-EngB-Septin-like GTPase superfamily. TrmE GTPase family. Homodimer. Heterotetramer of two MnmE and two MnmG subunits. K(+) is required as a cofactor.

Its subcellular location is the cytoplasm. Functionally, exhibits a very high intrinsic GTPase hydrolysis rate. Involved in the addition of a carboxymethylaminomethyl (cmnm) group at the wobble position (U34) of certain tRNAs, forming tRNA-cmnm(5)s(2)U34. In Cereibacter sphaeroides (strain ATCC 17025 / ATH 2.4.3) (Rhodobacter sphaeroides), this protein is tRNA modification GTPase MnmE.